The primary structure comprises 322 residues: Germ cell-specific gene 1-like protein (322 aa).

Residues 1 to 8 (MKTSRRGR) lie on the Cytoplasmic side of the membrane. The chain crosses the membrane as a helical span at residues 9-29 (ALLAVALNLLALLFATTAFLT). Topologically, residues 30–122 (TYWCQGTQRV…FIDLAPASEK (93 aa)) are extracellular. The helical transmembrane segment at 123–143 (GVLWLSVVSEVLYILLLVVGF) threads the bilayer. Residues 144–163 (SLMCLELVHSSSVIDGLKLN) are Cytoplasmic-facing. The chain crosses the membrane as a helical span at residues 164–184 (AFAAVFTVLSGLLGMVAHMMY). Residues 185–207 (TQVFQVTVSLGPEDWRPHSWDYG) lie on the Extracellular side of the membrane. The helical transmembrane segment at 208-228 (WSFCLAWGSFTCCMAASVTTL) threads the bilayer. The Cytoplasmic portion of the chain corresponds to 229–322 (NSYTKTVIEF…RQCWVLGHWV (94 aa)). Serine 274 carries the phosphoserine modification.

Belongs to the GSG1 family. As to quaternary structure, component of the inner core of AMPAR complexes. AMPAR complexes consist of an inner core made of 4 pore-forming GluA/GRIA proteins (GRIA1, GRIA2, GRIA3 and GRIA4) and 4 major auxiliary subunits arranged in a twofold symmetry. One of the two pairs of distinct binding sites is occupied either by CNIH2, CNIH3 or CACNG2, CACNG3. The other harbors CACNG2, CACNG3, CACNG4, CACNG8 or GSG1L. This inner core of AMPAR complexes is complemented by outer core constituents binding directly to the GluA/GRIA proteins at sites distinct from the interaction sites of the inner core constituents. Outer core constituents include at least PRRT1, PRRT2, CKAMP44/SHISA9, FRRS1L and NRN1. The proteins of the inner and outer core serve as a platform for other, more peripherally associated AMPAR constituents. Alone or in combination, these auxiliary subunits control the gating and pharmacology of the AMPAR complexes and profoundly impact their biogenesis and protein processing. Expressed in the brain, including hippocampus (at protein level).

It is found in the cell membrane. It localises to the synapse. In terms of biological role, as a component of the inner core of AMPAR complexes, modifies AMPA receptor (AMPAR) gating. This is Germ cell-specific gene 1-like protein (Gsg1l) from Mus musculus (Mouse).